Reading from the N-terminus, the 34-residue chain is Leader peptide SpeFL (34 aa).

The interval 1-13 (MENNSRTMPHIRR) is sensor domain. The short motif at 10-16 (HIRRTTH) is the Ornithine recognition loop element. Arg-13 lines the L-ornithine pocket. An effector domain region spans residues 14–34 (TTHIMKFAHRNSFDFHFFNAR).

It belongs to the speF operon leader peptide family. As to quaternary structure, binds ornithine in stalled 70S ribosomes, blocking the upper two-thirds of the exit tunnel. Contacts 23S rRNA and ribosomal proteins L4 and L22.

Its function is as follows. A small protein (arrest peptide) encoded upstream of inducible ornithine carboxylase gene (speF) that controls expression of downstream genes (speF and patE) by nascent chain-translational arrest and transcriptional attenuation. In the presence of ornithine a toeprint due to ribosomal arrest can be seen on the speFL transcript. Only L-ornithine (not other tested amino acids) has this effect. It is thought that in the presence of ornithine, ribosomal stalling on speFL prevents binding of Rho transcription termination factor to a downstream rut site allowing transcription of the operon. In the absence of ornithine, ribosomes terminate translation and are recycled, exposing the rut site allowing Rho to bind and prematurely terminate transcription. The presence of a pair of rare Arg codons could slow down translation to prevent polysome accumulation and to expose the rut site to Rho. The protein is Leader peptide SpeFL of Escherichia coli (strain K12).